A 554-amino-acid polypeptide reads, in one-letter code: Malate synthase 1 (554 aa).

Arg177 (proton acceptor) is an active-site residue. The active-site Proton donor is Asp457. An SKL peroxisome targeting motif motif is present at residues 552–554; that stretch reads SKL.

Belongs to the malate synthase family. As to quaternary structure, interacts with PEX9.

The protein localises to the peroxisome matrix. The enzyme catalyses glyoxylate + acetyl-CoA + H2O = (S)-malate + CoA + H(+). It participates in carbohydrate metabolism; glyoxylate cycle; (S)-malate from isocitrate: step 2/2. Its function is as follows. Malate synthase which takes part in the glyoxylate cycle. MLS1 activity is essential for cells to grow on oleic acid as a sole carbon source. Two steps of the glyoxylate cycle take place in the cytosol, the splitting of isocitrate into succinate and glyoxylate, and the dehydrogenation of malate to oxaloacetate. However, the formation of malate from glyoxylate and acetyl-CoA undertaken MLS1, occurs in the peroxisomes when cells are grown on oleic acid. The source of acetyl-CoA being either peroxisomal when breaking down fatty acids, or cytosolic when extra-cellular two-carbon substrates are used, therefore, although not strictly essential, the peroxisomal localization of MLS1 appears to be advantageous for cells growing on oleic acid, in that acetyl-CoA production and utilization are thereby intimately compartmentalized together to increase efficiency. This is Malate synthase 1 from Saccharomyces cerevisiae (strain ATCC 204508 / S288c) (Baker's yeast).